The chain runs to 295 residues: Protoheme IX farnesyltransferase (295 aa).

7 helical membrane-spanning segments follow: residues 43 to 63 (PIQLALLVLGTSAAAGGVAAL), 92 to 112 (SAFVLGVLMCIGSLFLLYALV), 114 to 134 (PLAALFTLLTIFSYLGWYTPA), 140 to 160 (WSTEIGAVAGAFPPLIGWSAG), 166 to 186 (ALGWVLFGVLFFWQVPHFMAV), 231 to 251 (LLWGLTTWFYGVAAAVTGLWF), and 272 to 292 (FFASIGYLPLVLGALVIDRLF).

This sequence belongs to the UbiA prenyltransferase family. Protoheme IX farnesyltransferase subfamily.

It is found in the cell inner membrane. It catalyses the reaction heme b + (2E,6E)-farnesyl diphosphate + H2O = Fe(II)-heme o + diphosphate. It functions in the pathway porphyrin-containing compound metabolism; heme O biosynthesis; heme O from protoheme: step 1/1. In terms of biological role, converts heme B (protoheme IX) to heme O by substitution of the vinyl group on carbon 2 of heme B porphyrin ring with a hydroxyethyl farnesyl side group. In Opitutus terrae (strain DSM 11246 / JCM 15787 / PB90-1), this protein is Protoheme IX farnesyltransferase.